A 366-amino-acid polypeptide reads, in one-letter code: Pectinesterase A (366 aa).

An N-terminal signal peptide occupies residues 1–24 (MLKTISGTLALSLIIAASVHQAQA). Thr109 and Gln153 together coordinate substrate. Asp178 serves as the catalytic Proton donor. Cys192 and Cys212 form a disulfide bridge. The active-site Nucleophile is Asp199. Arg219, Asn226, Tyr230, Arg267, Trp269, and Thr272 together coordinate substrate.

This sequence belongs to the pectinesterase family. In terms of assembly, monomer.

It localises to the secreted. The enzyme catalyses [(1-&gt;4)-alpha-D-galacturonosyl methyl ester](n) + n H2O = [(1-&gt;4)-alpha-D-galacturonosyl](n) + n methanol + n H(+). Its pathway is glycan metabolism; pectin degradation; 2-dehydro-3-deoxy-D-gluconate from pectin: step 1/5. Involved in maceration and soft-rotting of plant tissue. This is Pectinesterase A (pemA) from Dickeya chrysanthemi (Pectobacterium chrysanthemi).